The sequence spans 149 residues: Ribosome-binding factor A (149 aa).

The disordered stretch occupies residues 125-149 (FGSADEVLNEDEGATDDTDDTKGKD). Residues 131 to 143 (VLNEDEGATDDTD) show a composition bias toward acidic residues.

It belongs to the RbfA family. As to quaternary structure, monomer. Binds 30S ribosomal subunits, but not 50S ribosomal subunits or 70S ribosomes.

It is found in the cytoplasm. Functionally, one of several proteins that assist in the late maturation steps of the functional core of the 30S ribosomal subunit. Associates with free 30S ribosomal subunits (but not with 30S subunits that are part of 70S ribosomes or polysomes). Required for efficient processing of 16S rRNA. May interact with the 5'-terminal helix region of 16S rRNA. The sequence is that of Ribosome-binding factor A from Shewanella sp. (strain W3-18-1).